Consider the following 633-residue polypeptide: Rab11 family-interacting protein 4 (633 aa).

EF-hand domains follow at residues 17–52 (LFLQ…FAQG) and 50–85 (AQGD…MKGC). Ca(2+) contacts are provided by D30, D32, D34, D63, N65, R69, and D74. Disordered stretches follow at residues 152–182 (SDLD…LGSL) and 218–257 (GEGE…QTPR). Polar residues predominate over residues 238 to 254 (TNALSDLGSSVPSSAGQ). Residues 410 to 613 (AREKGTEIVL…EEINYRLRQY (204 aa)) adopt a coiled-coil conformation. Residues 570-632 (EAKSLFSTQT…DHNPSILEIK (63 aa)) form the FIP-RBD domain.

As to quaternary structure, homodimer. Forms a complex with Rab11 (rab11a or rab11b) and arf6.

It is found in the recycling endosome membrane. Its subcellular location is the cleavage furrow. The protein resides in the midbody. The protein localises to the cytoplasmic vesicle. Functionally, acts as a regulator of endocytic traffic by participating in membrane delivery. Required for the abscission step in cytokinesis, possibly by acting as an 'address tag' delivering recycling endosome membranes to the cleavage furrow during late cytokinesis. The polypeptide is Rab11 family-interacting protein 4 (rab11fip4) (Xenopus tropicalis (Western clawed frog)).